Reading from the N-terminus, the 79-residue chain is Defensin-like protein 109 (79 aa).

An N-terminal signal peptide occupies residues methionine 1–cysteine 24. Cystine bridges form between cysteine 41–cysteine 76, cysteine 47–cysteine 68, cysteine 54–cysteine 74, and cysteine 58–cysteine 75.

It belongs to the DEFL family.

It localises to the secreted. This chain is Defensin-like protein 109, found in Arabidopsis thaliana (Mouse-ear cress).